The sequence spans 397 residues: MLRKKTLRDVDVKGKRVLVRVDYNVPLDEQGNIVDDTRIRASLPTVEYLLDANAKVILMSHLGRPKNRDPKYSLAPVAKRLSRYINKEVKLAPDCVGEEVKRIVNSMKEGDVVLLENLRFHKEETECDENFARELASLGEVYVADAFGTCHRKHASVYLVPKFLKPAVMGFLLEKEITYFEKAMVAPQRPVVAILGGAKVSSKLEVIKNLIRRVDKLFIGGAMAFTFLKAMGYKVGNSLVEDDLQDVARDLIDVAKKLEIKLYLPVDFVIGQEVSENTPTKVVPWQEIPDGWMGLDIGPVSVELVKEIISDAQTIVWNGPMGVFEIDKFKHGTIEVAKLLAQSSALTIAGGGDTDHAIHKAGVYHAFDFVSTGGGAFLELLAGKELPCLVNLDDKEA.

Residues Asp-22–Asn-24, Arg-38, His-61–Arg-64, Arg-119, and Arg-152 each bind substrate. ATP contacts are provided by residues Lys-203, Gly-294, Glu-325, and Gly-351–Thr-354.

It belongs to the phosphoglycerate kinase family. As to quaternary structure, monomer.

It is found in the cytoplasm. The catalysed reaction is (2R)-3-phosphoglycerate + ATP = (2R)-3-phospho-glyceroyl phosphate + ADP. It participates in carbohydrate degradation; glycolysis; pyruvate from D-glyceraldehyde 3-phosphate: step 2/5. The chain is Phosphoglycerate kinase (pgk) from Aquifex aeolicus (strain VF5).